The chain runs to 154 residues: Spore-associated protein A (154 aa).

Residues 1–33 (MQAVGATLTAVGAIGAGLLVTAPAAGAATAGAT) form the signal peptide.

It is found in the spore wall. The sequence is that of Spore-associated protein A from Streptomyces coelicolor (strain ATCC BAA-471 / A3(2) / M145).